The chain runs to 467 residues: Heat shock factor protein 3 (467 aa).

Residues 16–121 (VPGFLAKLWA…LLENIKRKVS (106 aa)) mediate DNA binding. The hydrophobic repeat HR-A/B stretch occupies residues 128-201 (LKVCAEDLHK…LSLMRGNYIV (74 aa)). The hydrophobic repeat HR-C stretch occupies residues 364-389 (IQDFLNCIDASLEELQAMLSGKQYSF). A disordered region spans residues 427–449 (EDLGASERETAGSKGGQEGTESC).

The protein belongs to the HSF family. As to quaternary structure, homotrimer. As to expression, expressed in most tissues. High levels are found in erythrocytes and low levels in liver.

Its subcellular location is the cytoplasm. The protein resides in the nucleus. Functionally, DNA-binding protein that specifically binds heat shock promoter elements (HSE) and activates transcription. HSF3 binds DNA constitutively only when the C-terminal region is deleted. The chain is Heat shock factor protein 3 (HSF3) from Gallus gallus (Chicken).